A 226-amino-acid polypeptide reads, in one-letter code: ATP-dependent dethiobiotin synthetase BioD (226 aa).

13-18 serves as a coordination point for ATP; the sequence is DVGKTL. Residue Thr-17 coordinates Mg(2+). Residue Lys-38 is part of the active site. ATP contacts are provided by residues Asp-55, 117 to 120, 177 to 178, 206 to 208, and Glu-213; these read EGAG, NR, and PFV. Mg(2+) contacts are provided by Asp-55 and Glu-117.

It belongs to the dethiobiotin synthetase family. As to quaternary structure, homodimer. Mg(2+) is required as a cofactor.

It is found in the cytoplasm. The enzyme catalyses (7R,8S)-7,8-diammoniononanoate + CO2 + ATP = (4R,5S)-dethiobiotin + ADP + phosphate + 3 H(+). The protein operates within cofactor biosynthesis; biotin biosynthesis; biotin from 7,8-diaminononanoate: step 1/2. Catalyzes a mechanistically unusual reaction, the ATP-dependent insertion of CO2 between the N7 and N8 nitrogen atoms of 7,8-diaminopelargonic acid (DAPA, also called 7,8-diammoniononanoate) to form a ureido ring. In Aeromonas hydrophila subsp. hydrophila (strain ATCC 7966 / DSM 30187 / BCRC 13018 / CCUG 14551 / JCM 1027 / KCTC 2358 / NCIMB 9240 / NCTC 8049), this protein is ATP-dependent dethiobiotin synthetase BioD.